We begin with the raw amino-acid sequence, 121 residues long: Splicing factor 3B subunit 6 (121 aa).

An interaction with pre-mRNA branch site region spans residues 12–25 (EVNRLLYVRNLPYK). In terms of domain architecture, RRM spans 15–90 (RLLYVRNLPY…RYLVVLYYQS (76 aa)).

The protein belongs to the SF3B6 family. As to quaternary structure, component of splicing factor SF3B complex. Component of the U11/U12 snRNPs that are part of the U12-type spliceosome.

It localises to the nucleus. In terms of biological role, involved in pre-mRNA splicing as a component of the splicing factor SF3B complex. SF3B complex is required for 'A' complex assembly formed by the stable binding of U2 snRNP to the branchpoint sequence (BPS) in pre-mRNA. Directly contacts the pre-mRNA branch site adenosine for the first catalytic step of splicing. Enters the spliceosome and associates with the pre-mRNA branch site as part of the 17S U2 or, in the case of the minor spliceosome, as part of the 18S U11/U12 snRNP complex, and thus may facilitate the interaction of these snRNP with the branch sites of U2 and U12 respectively. In Drosophila melanogaster (Fruit fly), this protein is Splicing factor 3B subunit 6.